A 385-amino-acid polypeptide reads, in one-letter code: 2-oxoglutarate-dependent dioxygenase AFUA_1G01000 (385 aa).

Residues 203–327 form the Fe2OG dioxygenase domain; sequence PSDDFLRLLR…RYSVLVGTRP (125 aa). Residues His-230, Asp-232, and His-304 each coordinate Fe cation. Arg-318 is a binding site for 2-oxoglutarate.

Belongs to the iron/ascorbate-dependent oxidoreductase family. Fe(2+) is required as a cofactor.

2-oxoglutarate-dependent dioxygenase; part of the gene cluster that mediates the biosynthesis of fumigermin that inhibits germination of spores of the inducing S.rapamycinicus, and thus helps the fungus to defend resources in the shared habitat against a bacterial competitor. The partially reducing polyketide synthase fngA alone is sufficient for the production of fumigermin. FgnA catalyzes the condensation of 3 malonyl-CoA units to an acetyl-CoA starter, and 3 methylations to yield fumigermin. It is remarkable that the five cluster genes including fgnA are conserved in distantly related fungi, supporting the assumption of a fumigermin cluster; it is thus possible that originally all five genes were functional, but that the genes encoding tailoring enzymes became inactive from mutations, similar to the case of the fgnA gene in strains A1163 and Af293. The protein is 2-oxoglutarate-dependent dioxygenase AFUA_1G01000 of Aspergillus fumigatus (strain ATCC MYA-4609 / CBS 101355 / FGSC A1100 / Af293) (Neosartorya fumigata).